A 391-amino-acid polypeptide reads, in one-letter code: MGSLGAILKHPDDFYPLLKLKIAARHAEKQIPSEPHWAFCYSMLHKVSRSFGLVIQQLGPQLRDAVCIFYLVLRALDTVEDDTSISTEVKVPIVMAFHCHIYDNDWHFSCGTKEYKVLMDEFHHVSNAFLDLGSSYKEAIEDITMRMGAGMAKFICKEVETIDDYDEYCHYVAGLVGLGLSKLFHASGAEDLATDSLSNSMGLFLQKTNIIRDYLEDINEIPKSRMFWPRQIWSKYVDKLEDLKYEENSAKAVQCLNDMVTDALVHAEDCLKYMSDLRGPAIFRFCAIPQIMAIGTLALCFNNTQVFRGVVKMRRGLTAKVIDQTKTMSDVYGAFFDFSCLLKSKVDNNDPNATKTLSRLEAIQKTCKESGTLSKRFCVFDFPLETIFYRV.

It belongs to the phytoene/squalene synthase family. Requires Mg(2+) as cofactor. The cofactor is Mn(2+).

It localises to the endoplasmic reticulum. It carries out the reaction 2 (2E,6E)-farnesyl diphosphate + NADH + H(+) = squalene + 2 diphosphate + NAD(+). It catalyses the reaction 2 (2E,6E)-farnesyl diphosphate + NADPH + H(+) = squalene + 2 diphosphate + NADP(+). It functions in the pathway terpene metabolism; lanosterol biosynthesis; lanosterol from farnesyl diphosphate: step 1/3. In terms of biological role, component of the triterpene saponins (e.g. ginsenosides or panaxosides) and phytosterols biosynthetic pathways. Catalyzes the biosynthesis of squalene. The sequence is that of Squalene synthase 8 from Panax ginseng (Korean ginseng).